Consider the following 585-residue polypeptide: Protein FAM151A (585 aa).

A helical membrane pass occupies residues 14–34 (WVFAGITCVSVVVIAAIVLAI).

This sequence belongs to the menorin family.

The protein localises to the membrane. The chain is Protein FAM151A (FAM151A) from Homo sapiens (Human).